The primary structure comprises 138 residues: UPF0251 protein Dole_1957 (138 aa).

This sequence belongs to the UPF0251 family.

In Desulfosudis oleivorans (strain DSM 6200 / JCM 39069 / Hxd3) (Desulfococcus oleovorans), this protein is UPF0251 protein Dole_1957.